Consider the following 1232-residue polypeptide: Pyruvate:ferredoxin oxidoreductase (1232 aa).

Thr31 serves as a coordination point for pyruvate. Glu64 lines the thiamine diphosphate pocket. A pyruvate-binding site is contributed by Arg114. Residues 427-431 (ADGTV), Lys459, Asn560, and Asn602 contribute to the CoA site. 4Fe-4S ferredoxin-type domains follow at residues 680–709 (NVPQWVPENCIQCNQCAFVCPHSAILPVLA) and 736–767 (FRIQINTLDCMGCGNCADICPPKEKALVMQPL). Positions 689, 692, 695, 699, 745, 748, 751, 755, 812, and 815 each coordinate [4Fe-4S] cluster. Thiamine diphosphate-binding positions include Glu817, Cys840, and 962-965 (GDGW). Cys840 contacts [4Fe-4S] cluster. Position 963 (Asp963) interacts with Mg(2+). Residues Asp983 and Asn985 each coordinate Ca(2+). Residues Thr991 and Val993 each coordinate Mg(2+). 991-996 (TEVYSN) lines the thiamine diphosphate pocket. Ca(2+)-binding residues include Ala1056, Phe1059, Gly1061, and Ser1063. Residue Cys1071 participates in [4Fe-4S] cluster binding. Cys1195 and Cys1212 are joined by a disulfide. The segment at 1197–1232 (RDDTPMMARPDSGEACDQNRAGTSEQQGDLSKRTKK) is disordered. Polar residues predominate over residues 1216 to 1225 (RAGTSEQQGD).

It belongs to the pyruvate:ferredoxin/flavodoxin oxidoreductase family. Homodimer. [4Fe-4S] cluster is required as a cofactor. The cofactor is thiamine diphosphate. Mg(2+) serves as cofactor.

The protein resides in the cytoplasm. It carries out the reaction 2 oxidized [2Fe-2S]-[ferredoxin] + pyruvate + CoA = 2 reduced [2Fe-2S]-[ferredoxin] + acetyl-CoA + CO2 + H(+). In terms of biological role, catalyzes the ferredoxin-dependent oxidative decarboxylation of pyruvate. Required for the transfer of electrons from pyruvate to ferredoxin. Ferredoxin I and ferredoxin II, which are single 4Fe-4S cluster ferredoxins are the most effective electron carriers of POR. In Desulfocurvibacter africanus (Desulfovibrio africanus), this protein is Pyruvate:ferredoxin oxidoreductase.